Reading from the N-terminus, the 204-residue chain is MKKYLNLTALLLVGISNVTWANAVNELQNRLNKIDVLSADYTQQVTDAQGKKIQQGSGKIQLKRPNLFRMDNETPQESQIIADGKTLWFYDPFVEQVTANWVEDTLSDTPFVLLTSNNPSHWQQYIVEQKSDTFIIKPKSKKSTIKQFNIRIEKDGVLKNFSTIEKDGQSNLYILRKITNPALNDAIFTFTLPKGVEFDDQRKK.

The signal sequence occupies residues 1 to 21; sequence MKKYLNLTALLLVGISNVTWA.

The protein belongs to the LolA family. Monomer.

The protein resides in the periplasm. Its function is as follows. Participates in the translocation of lipoproteins from the inner membrane to the outer membrane. Only forms a complex with a lipoprotein if the residue after the N-terminal Cys is not an aspartate (The Asp acts as a targeting signal to indicate that the lipoprotein should stay in the inner membrane). The polypeptide is Outer-membrane lipoprotein carrier protein (Histophilus somni (strain 2336) (Haemophilus somnus)).